Here is a 511-residue protein sequence, read N- to C-terminus: Lysine--tRNA ligase 2 (511 aa).

A disordered region spans residues 1–22 (MTMEINNTDPFEKMPLPDDSGL). The Mg(2+) site is built by E421 and E428.

It belongs to the class-II aminoacyl-tRNA synthetase family. Homodimer. It depends on Mg(2+) as a cofactor.

It localises to the cytoplasm. The catalysed reaction is tRNA(Lys) + L-lysine + ATP = L-lysyl-tRNA(Lys) + AMP + diphosphate. This is Lysine--tRNA ligase 2 from Methanosarcina mazei (strain ATCC BAA-159 / DSM 3647 / Goe1 / Go1 / JCM 11833 / OCM 88) (Methanosarcina frisia).